The sequence spans 145 residues: Phospholipase A2 phospholipin (145 aa).

Residues 1 to 15 form the signal peptide; it reads MVDLARRCSGSTEGR. Positions 24, 26, and 28 each coordinate Ca(2+). Cystine bridges form between C25/C46, C45/C84, C52/C77, C75/C116, and C121/C132. Residue H49 is part of the active site. Residue D50 coordinates Ca(2+). A propeptide spanning residues 124–128 is cleaved from the precursor; the sequence is KRSGR.

It belongs to the phospholipase A2 family. Group III subfamily. In terms of assembly, heterodimer composed of a small subunit and a large subunit; disulfid-linked. Ca(2+) serves as cofactor. As to expression, expressed by the venom gland.

The protein localises to the secreted. It catalyses the reaction a 1,2-diacyl-sn-glycero-3-phosphocholine + H2O = a 1-acyl-sn-glycero-3-phosphocholine + a fatty acid + H(+). Scorpion venom phospholipase A2 (PLA2) that contains enzymatic activity, but does not inhibit ryanodine receptors in contrary to imperatoxin-1, another heterodimer of P.imperator venom. PLA2 catalyzes the calcium-dependent hydrolysis of the 2-acyl groups in 3-sn-phosphoglycerides. The polypeptide is Phospholipase A2 phospholipin (Pandinus imperator (Emperor scorpion)).